Reading from the N-terminus, the 840-residue chain is Protein translocase subunit SecA (840 aa).

Residues Q85, 103 to 107, and D492 each bind ATP; that span reads GEGKT. Positions 787–821 are disordered; sequence QRERVAKETGASHGGDSQEIKKKPVKKEPKVGRND. Residues 802–819 are compositionally biased toward basic and acidic residues; sequence DSQEIKKKPVKKEPKVGR. The Zn(2+) site is built by C823, C825, C834, and C835.

It belongs to the SecA family. As to quaternary structure, monomer and homodimer. Part of the essential Sec protein translocation apparatus which comprises SecA, SecYEG and auxiliary proteins SecDF. Other proteins may also be involved. Requires Zn(2+) as cofactor.

The protein resides in the cell membrane. It is found in the cytoplasm. It catalyses the reaction ATP + H2O + cellular proteinSide 1 = ADP + phosphate + cellular proteinSide 2.. Part of the Sec protein translocase complex. Interacts with the SecYEG preprotein conducting channel. Has a central role in coupling the hydrolysis of ATP to the transfer of proteins into and across the cell membrane, serving as an ATP-driven molecular motor driving the stepwise translocation of polypeptide chains across the membrane. The chain is Protein translocase subunit SecA from Clostridium perfringens (strain SM101 / Type A).